The chain runs to 140 residues: Large ribosomal subunit protein uL11 (140 aa).

This sequence belongs to the universal ribosomal protein uL11 family. Part of the ribosomal stalk of the 50S ribosomal subunit. Interacts with L10 and the large rRNA to form the base of the stalk. L10 forms an elongated spine to which L12 dimers bind in a sequential fashion forming a multimeric L10(L12)X complex. In terms of processing, one or more lysine residues are methylated.

In terms of biological role, forms part of the ribosomal stalk which helps the ribosome interact with GTP-bound translation factors. The chain is Large ribosomal subunit protein uL11 from Staphylococcus epidermidis (strain ATCC 35984 / DSM 28319 / BCRC 17069 / CCUG 31568 / BM 3577 / RP62A).